The primary structure comprises 85 residues: Putative membrane protein insertion efficiency factor (85 aa).

The protein belongs to the UPF0161 family.

It localises to the cell inner membrane. In terms of biological role, could be involved in insertion of integral membrane proteins into the membrane. The polypeptide is Putative membrane protein insertion efficiency factor (Vibrio cholerae serotype O1 (strain ATCC 39315 / El Tor Inaba N16961)).